The sequence spans 131 residues: uncharacterized protein (131 aa).

The 116-residue stretch at 1 to 116 (MYMARMLSEM…EMLEASSIQC (116 aa)) folds into the CMP/dCMP-type deaminase domain.

This is an uncharacterized protein from Caenorhabditis elegans.